The following is a 419-amino-acid chain: Serine/threonine-protein kinase Kist (419 aa).

Residues 23 to 303 (WQVQSRLGSG…PAEMALCSPF (281 aa)) form the Protein kinase domain. ATP contacts are provided by residues 29-37 (LGSGSSASV) and Lys-54. Asp-158 acts as the Proton acceptor in catalysis. The 83-residue stretch at 323–405 (LRLLNVLDDD…GKFVVATFYP (83 aa)) folds into the RRM domain.

Belongs to the protein kinase superfamily. Ser/Thr protein kinase family. In terms of assembly, interacts with PAM and CDKN1B/p27Kip1. Interacts with stathmin.

It localises to the nucleus. The catalysed reaction is L-seryl-[protein] + ATP = O-phospho-L-seryl-[protein] + ADP + H(+). It catalyses the reaction L-threonyl-[protein] + ATP = O-phospho-L-threonyl-[protein] + ADP + H(+). Upon serum stimulation, phosphorylates CDKN1B/p27Kip1, thus controlling CDKN1B subcellular location and cell cycle progression in G1 phase. May be involved in trafficking and/or processing of RNA. The chain is Serine/threonine-protein kinase Kist (Uhmk1) from Mus musculus (Mouse).